We begin with the raw amino-acid sequence, 181 residues long: ATP-dependent protease subunit HslV (181 aa).

Thr7 is a catalytic residue. Na(+) is bound by residues Ala166, Cys169, and Thr172.

It belongs to the peptidase T1B family. HslV subfamily. A double ring-shaped homohexamer of HslV is capped on each side by a ring-shaped HslU homohexamer. The assembly of the HslU/HslV complex is dependent on binding of ATP.

The protein localises to the cytoplasm. The catalysed reaction is ATP-dependent cleavage of peptide bonds with broad specificity.. With respect to regulation, allosterically activated by HslU binding. Protease subunit of a proteasome-like degradation complex believed to be a general protein degrading machinery. This Anaeromyxobacter sp. (strain Fw109-5) protein is ATP-dependent protease subunit HslV.